A 659-amino-acid polypeptide reads, in one-letter code: DNA ligase (659 aa).

NAD(+)-binding positions include 31-35 (DFVYD), 80-81 (SL), and glutamate 109. The active-site N6-AMP-lysine intermediate is the lysine 111. NAD(+)-binding residues include arginine 132, glutamate 166, lysine 281, and lysine 305. Residues cysteine 398, cysteine 401, cysteine 416, and cysteine 421 each contribute to the Zn(2+) site. The BRCT domain occupies 581 to 659 (VTTHPFNGKT…EATFKVKINE (79 aa)).

This sequence belongs to the NAD-dependent DNA ligase family. LigA subfamily. Mg(2+) serves as cofactor. It depends on Mn(2+) as a cofactor.

It carries out the reaction NAD(+) + (deoxyribonucleotide)n-3'-hydroxyl + 5'-phospho-(deoxyribonucleotide)m = (deoxyribonucleotide)n+m + AMP + beta-nicotinamide D-nucleotide.. In terms of biological role, DNA ligase that catalyzes the formation of phosphodiester linkages between 5'-phosphoryl and 3'-hydroxyl groups in double-stranded DNA using NAD as a coenzyme and as the energy source for the reaction. It is essential for DNA replication and repair of damaged DNA. In Acholeplasma laidlawii (strain PG-8A), this protein is DNA ligase.